We begin with the raw amino-acid sequence, 579 residues long: Nuclear hormone receptor family member nhr-47 (579 aa).

Residues 8–83 (GTLCAVCDDI…VGMDKNSIQN (76 aa)) constitute a DNA-binding region (nuclear receptor). 2 NR C4-type zinc fingers span residues 11–31 (CAVC…CNGC) and 47–71 (CQGN…LQKC). The disordered stretch occupies residues 87–128 (RIGYTKRKRRHDDNDMEGGVHHSEHIRDGSSGSPQMNDESPE). Positions 104–114 (GGVHHSEHIRD) are enriched in basic and acidic residues. An NR LBD domain is found at 164 to 553 (ADLHSYATLE…SLVKETSLGP (390 aa)).

It belongs to the nuclear hormone receptor family.

Its subcellular location is the nucleus. Functionally, orphan nuclear receptor. This is Nuclear hormone receptor family member nhr-47 (nhr-47) from Caenorhabditis elegans.